The chain runs to 380 residues: Phospho-N-acetylmuramoyl-pentapeptide-transferase (380 aa).

The next 11 membrane-spanning stretches (helical) occupy residues 26 to 46, 75 to 95, 98 to 118, 135 to 155, 160 to 180, 183 to 203, 222 to 242, 259 to 279, 283 to 303, 311 to 331, and 357 to 377; these read IVAA…LFIE, MGGA…ADLG, LVWA…WDDW, LVLQ…DWQP, GFPF…PFVP, LFSP…VVAT, IVSS…IAGF, LGVF…YNTY, VFMG…LAVL, AILH…VWSF, and KIIV…LMSL.

The protein belongs to the glycosyltransferase 4 family. MraY subfamily. Mg(2+) is required as a cofactor.

Its subcellular location is the cell inner membrane. It carries out the reaction UDP-N-acetyl-alpha-D-muramoyl-L-alanyl-gamma-D-glutamyl-meso-2,6-diaminopimeloyl-D-alanyl-D-alanine + di-trans,octa-cis-undecaprenyl phosphate = di-trans,octa-cis-undecaprenyl diphospho-N-acetyl-alpha-D-muramoyl-L-alanyl-D-glutamyl-meso-2,6-diaminopimeloyl-D-alanyl-D-alanine + UMP. It functions in the pathway cell wall biogenesis; peptidoglycan biosynthesis. Catalyzes the initial step of the lipid cycle reactions in the biosynthesis of the cell wall peptidoglycan: transfers peptidoglycan precursor phospho-MurNAc-pentapeptide from UDP-MurNAc-pentapeptide onto the lipid carrier undecaprenyl phosphate, yielding undecaprenyl-pyrophosphoryl-MurNAc-pentapeptide, known as lipid I. This Anaeromyxobacter sp. (strain Fw109-5) protein is Phospho-N-acetylmuramoyl-pentapeptide-transferase.